The sequence spans 301 residues: Phosphatidylglycerol--prolipoprotein diacylglyceryl transferase (301 aa).

3 helical membrane-spanning segments follow: residues 17–37 (LAVRWYGLMYLVAFIAAIVVG), 59–79 (MLFYGVLGTILGGRLGYVLFY), and 97–117 (GGMSFHGGFLGVTLAMVLFAY). A 1,2-diacyl-sn-glycero-3-phospho-(1'-sn-glycerol) is bound at residue Arg142. 2 consecutive transmembrane segments (helical) span residues 230 to 250 (MGAISAVFLIGYGLARFTVEF) and 265 to 285 (LSMGQWLSLPMILVGIGLLVW).

The protein belongs to the Lgt family.

The protein resides in the cell inner membrane. It catalyses the reaction L-cysteinyl-[prolipoprotein] + a 1,2-diacyl-sn-glycero-3-phospho-(1'-sn-glycerol) = an S-1,2-diacyl-sn-glyceryl-L-cysteinyl-[prolipoprotein] + sn-glycerol 1-phosphate + H(+). Its pathway is protein modification; lipoprotein biosynthesis (diacylglyceryl transfer). Functionally, catalyzes the transfer of the diacylglyceryl group from phosphatidylglycerol to the sulfhydryl group of the N-terminal cysteine of a prolipoprotein, the first step in the formation of mature lipoproteins. This Paraburkholderia xenovorans (strain LB400) protein is Phosphatidylglycerol--prolipoprotein diacylglyceryl transferase.